Consider the following 111-residue polypeptide: Succinate dehydrogenase assembly factor 1B, mitochondrial (111 aa).

It belongs to the complex I LYR family. SDHAF1 subfamily. Interacts with the iron-sulfur protein subunit within the SDH catalytic dimer.

The protein localises to the mitochondrion matrix. In terms of biological role, plays an essential role in the assembly of succinate dehydrogenase (SDH), an enzyme complex (also referred to as respiratory complex II) that is a component of both the tricarboxylic acid (TCA) cycle and the mitochondrial electron transport chain, and which couples the oxidation of succinate to fumarate with the reduction of ubiquinone (coenzyme Q) to ubiquinol. Promotes maturation of the iron-sulfur protein subunit of the SDH catalytic dimer, protecting it from the deleterious effects of oxidants. May act together with SDHAF3. The sequence is that of Succinate dehydrogenase assembly factor 1B, mitochondrial from Dictyostelium discoideum (Social amoeba).